The primary structure comprises 369 residues: Histidinol-phosphate aminotransferase 2 (369 aa).

Residue Lys-231 is modified to N6-(pyridoxal phosphate)lysine.

This sequence belongs to the class-II pyridoxal-phosphate-dependent aminotransferase family. Histidinol-phosphate aminotransferase subfamily. As to quaternary structure, homodimer. Pyridoxal 5'-phosphate is required as a cofactor.

It catalyses the reaction L-histidinol phosphate + 2-oxoglutarate = 3-(imidazol-4-yl)-2-oxopropyl phosphate + L-glutamate. It functions in the pathway amino-acid biosynthesis; L-histidine biosynthesis; L-histidine from 5-phospho-alpha-D-ribose 1-diphosphate: step 7/9. This Legionella pneumophila subsp. pneumophila (strain Philadelphia 1 / ATCC 33152 / DSM 7513) protein is Histidinol-phosphate aminotransferase 2.